A 124-amino-acid polypeptide reads, in one-letter code: Large ribosomal subunit protein eL22z (124 aa).

Belongs to the eukaryotic ribosomal protein eL22 family.

This is Large ribosomal subunit protein eL22z (RPL22B) from Arabidopsis thaliana (Mouse-ear cress).